Consider the following 254-residue polypeptide: Ribonuclease HII (254 aa).

An RNase H type-2 domain is found at 70–254; it reads QAIAGIDEVG…TFEPVKSMLG (185 aa). Residues aspartate 76, glutamate 77, and aspartate 168 each contribute to the a divalent metal cation site.

The protein belongs to the RNase HII family. Mn(2+) serves as cofactor. The cofactor is Mg(2+).

It localises to the cytoplasm. It catalyses the reaction Endonucleolytic cleavage to 5'-phosphomonoester.. Its function is as follows. Endonuclease that specifically degrades the RNA of RNA-DNA hybrids. This is Ribonuclease HII from Streptococcus gordonii (strain Challis / ATCC 35105 / BCRC 15272 / CH1 / DL1 / V288).